The sequence spans 477 residues: D-alanyl-D-alanine carboxypeptidase DacB (477 aa).

The first 20 residues, 1–20 (MRFSRFIIGLTSCIAFSVQA), serve as a signal peptide directing secretion. S62 acts as the Acyl-ester intermediate in catalysis. K65 (proton acceptor) is an active-site residue. Positions 90–263 (GNVENGVLKG…YAGAILKDEL (174 aa)) are absent in class-A beta-lactamases. The active site involves S306. K417 lines the substrate pocket.

It belongs to the peptidase S13 family.

The protein resides in the periplasm. It catalyses the reaction Preferential cleavage: (Ac)2-L-Lys-D-Ala-|-D-Ala. Also transpeptidation of peptidyl-alanyl moieties that are N-acyl substituents of D-alanine.. It functions in the pathway cell wall biogenesis; peptidoglycan biosynthesis. In terms of biological role, not involved in transpeptidation but exclusively catalyzes a DD-carboxypeptidase and DD-endopeptidase reaction. The chain is D-alanyl-D-alanine carboxypeptidase DacB (dacB) from Escherichia coli (strain K12).